A 359-amino-acid chain; its full sequence is Type-1 angiotensin II receptor (359 aa).

The Extracellular segment spans residues 1–25 (MVPNYSTEETVKRIHVDCPVSGRHS). N-linked (GlcNAc...) asparagine glycosylation occurs at Asn4. Residue Asp17 coordinates angiotensin II. 2 disulfides stabilise this stretch: Cys18/Cys274 and Cys101/Cys180. Residues 26-55 (YIYIMVPTVYSIIFIIGIFGNSLVVIVIYC) form a helical membrane-spanning segment. Over 56–61 (YMKLKT) the chain is Cytoplasmic. The helical transmembrane segment at 62–89 (VASIFLLNLALADLCFLITLPLWAAYTA) threads the bilayer. The Extracellular segment spans residues 90-98 (MEYQWPFGN). Residues 99-125 (CLCKLASAGISFNLYASVFLLTCLSID) traverse the membrane as a helical segment. Residues 126 to 141 (RYLAIVHPVKSRIRRT) are Cytoplasmic-facing. A helical transmembrane segment spans residues 142 to 165 (MFVARVTCIVIWLLAGVASLPVII). At 166-190 (HRNIFFAENLNMTVCGFRYDNNNTT) the chain is on the extracellular side. Arg167 is an angiotensin II binding site. N-linked (GlcNAc...) asparagine glycosylation is present at Asn176. Phe182 and Tyr184 together coordinate angiotensin II. Residues Asn187 and Asn188 are each glycosylated (N-linked (GlcNAc...) asparagine). A helical transmembrane segment spans residues 191 to 216 (LRVGLGLSKNLLGFLIPFLIILTSYT). Lys199 serves as a coordination point for angiotensin II. Residues 217–239 (LIWKTLKKAYQIQRNKTRNDDIF) are Cytoplasmic-facing. Residues 240 to 268 (KMIVAIVFFFFFSWIPHQVFTFLDVLIQL) traverse the membrane as a helical segment. The Extracellular portion of the chain corresponds to 269 to 278 (HVITDCKITD). The helical transmembrane segment at 279–304 (IVDTAMPFTICIAYFNNCLNPFFYVF) threads the bilayer. The Cytoplasmic portion of the chain corresponds to 305 to 359 (FGKNFKKYFLQLIKYIPPNVSTHPSLTTKMSSLSYRPPENIRLPTKKTAGSFDAE).

Belongs to the G-protein coupled receptor 1 family. In terms of processing, C-terminal Ser or Thr residues may be phosphorylated.

The protein localises to the cell membrane. Its function is as follows. Receptor for angiotensin II, a vasoconstricting peptide, which acts as a key regulator of blood pressure and sodium retention by the kidney. The activated receptor in turn couples to G-alpha proteins G(q) (GNAQ, GNA11, GNA14 or GNA15) and thus activates phospholipase C and increases the cytosolic Ca(2+) concentrations, which in turn triggers cellular responses such as stimulation of protein kinase C. This Gallus gallus (Chicken) protein is Type-1 angiotensin II receptor (AGTR1).